The sequence spans 297 residues: Vacuolar protein sorting-associated protein 26C (297 aa).

Belongs to the VPS26 family. As to quaternary structure, component of the commander complex that is essential for endosomal recycling of transmembrane cargos; the commander complex is composed of the CCC subcomplex and the retriever subcomplex. Component of the heterotrimeric retriever complex consisting of VPS26C, VPS29 and VPS35L; within the complex interacts with VPS35L. Interacts with SNX17 (via C-terminus); the interaction is direct and associates SNX17 with the retriever complex. Interacts with SNX31; the interaction is direct.

The protein localises to the endosome. Component of the commander complex that is essential for endosomal recycling of transmembrane cargos; the commander complex is composed of the CCC subcomplex and the retriever subcomplex. Component of the retriever complex, which is a heterotrimeric complex related to retromer cargo-selective complex (CSC) and essential for retromer-independent retrieval and recycling of numerous cargos such as integrin alpha-5/beta-1 (ITGA5:ITGB1). The recruitment of the retriever complex to the endosomal membrane involves CCC and WASH complexes. In the endosomes, drives the retriever and recycling of NxxY-motif-containing cargo proteins by coupling to SNX17, a cargo essential for the homeostatic maintenance of numerous cell surface proteins associated with processes that include cell migration, cell adhesion, nutrient supply and cell signaling. The chain is Vacuolar protein sorting-associated protein 26C (VPS26C) from Pongo abelii (Sumatran orangutan).